Consider the following 659-residue polypeptide: Zeaxanthin epoxidase, chloroplastic (659 aa).

The transit peptide at 1–50 (MALLSATAPAKTRFSLFSHEEAQHPHPHALSACCGGGASGKRQRARARVA) directs the protein to the chloroplast. FAD is bound by residues 79–107 (RVLV…TVFE) and 357–370 (TFNW…LLGD). The region spanning 553 to 607 (LSIGSRSDPSNSTASLALPLPQISENHATITCKNKAFYVTDNGSEHGTWITDNEG) is the FHA domain.

Requires FAD as cofactor. Expressed in young microspores.

It localises to the plastid. Its subcellular location is the chloroplast membrane. It is found in the chloroplast thylakoid membrane. It carries out the reaction all-trans-zeaxanthin + 4 reduced [2Fe-2S]-[ferredoxin] + 2 O2 + 4 H(+) = all-trans-violaxanthin + 4 oxidized [2Fe-2S]-[ferredoxin] + 2 H2O. It participates in plant hormone biosynthesis; abscisate biosynthesis. Zeaxanthin epoxidase that plays an important role in the xanthophyll cycle and abscisic acid (ABA) biosynthesis. Converts zeaxanthin into antheraxanthin and subsequently violaxanthin. Required for resistance to osmotic and drought stresses, seed development and dormancy. The protein is Zeaxanthin epoxidase, chloroplastic (ZEP) of Oryza sativa subsp. japonica (Rice).